The primary structure comprises 1262 residues: Structural maintenance of chromosomes protein 1 (1262 aa).

Residues 171 to 497 (SRSHEFQAEY…VAVVRQLSEA (327 aa)) are a coiled coil. Residues 524–642 (SVYGRLVDLC…ESQEDAKQLA (119 aa)) enclose the SMC hinge domain. Positions 680–937 (KKWDEKVVKQ…RLESLLTKKQ (258 aa)) form a coiled coil. Positions 965 to 994 (EYEEDDGDDTASQSSQSATDGPSVSEEQIQ) are disordered. The span at 974–991 (TASQSSQSATDGPSVSEE) shows a compositional bias: polar residues. Residues 1017-1086 (DGVRQMSNRL…QQFEKVKTDR (70 aa)) adopt a coiled-coil conformation. The short motif at 1148–1183 (LSGGEKTIAALALLFAVHGRNPAPFFVLDEIDAALD) is the DA-box element.

The protein belongs to the SMC family. SMC1 subfamily. As to quaternary structure, component of the cohesin complex, composed of the smc-1 and smc-3 heterodimer attached via their SMC hinge domain, scc-1 which links them, and scc-3. Interacts with smc-3, scc-1, scc-3 and tim-1.

The protein resides in the nucleus. Its subcellular location is the chromosome. Its function is as follows. Involved in chromosome cohesion during cell cycle and in DNA repair. Required for chromosome segregation during mitosis. Central component of cohesin complex. The cohesin complex is required for the cohesion of sister chromatids after DNA replication. The cohesin complex apparently forms a large proteinaceous ring within which sister chromatids can be trapped. At anaphase, the complex is cleaved and dissociates from chromatin, allowing sister chromatids to segregate. The chain is Structural maintenance of chromosomes protein 1 from Caenorhabditis elegans.